The chain runs to 40 residues: Natriuretic peptide PaNP-b (40 aa).

Cysteine 9 and cysteine 25 form a disulfide bridge. A propeptide spanning residues 36–40 (IPGGS) is cleaved from the precursor.

This sequence belongs to the natriuretic peptide family. In terms of tissue distribution, expressed by the venom gland.

It is found in the secreted. In terms of biological role, snake venom natriuretic peptide that targets both NPR1 and NPR2. Exhibits hypotensive and vasodepressor activities. The protein is Natriuretic peptide PaNP-b of Pseudechis australis (Mulga snake).